A 108-amino-acid chain; its full sequence is Translation initiation factor 1A (108 aa).

The 75-residue stretch at 11–85 (PSRDVPRPEE…NRCDILYKYG (75 aa)) folds into the S1-like domain.

Belongs to the eIF-1A family.

Its function is as follows. Seems to be required for maximal rate of protein biosynthesis. Enhances ribosome dissociation into subunits and stabilizes the binding of the initiator Met-tRNA(I) to 40 S ribosomal subunits. This chain is Translation initiation factor 1A (eIF1A), found in Saccharolobus solfataricus (strain ATCC 35092 / DSM 1617 / JCM 11322 / P2) (Sulfolobus solfataricus).